Consider the following 581-residue polypeptide: MLDLFGYKRRKTSVAQIGDTPLGGDFPIRIQSMANVSTMDTQASVDQAARIIDAGADYVRFTAQGVREAVNLQHIHAGLCRLGYHIPLVADIHFSPKAAEEALLHVEKVRINPGNFVEMKSGGNLTEEEAFDLGHKAVRERFGSFVEDAKRLGRAIRIGVNHGSLSERMLTRYGDTAEGMVQSCMEYLDVCHEHEFDDVVISMKASNTLVMTAAVRLLVERMDAADMHYPLHIGVTEAGDGEDGRIKSAVGIGSLLADGIGDTIRVSLSEDPEHEIPVARKLLAYIEKRNGHPSVAVPQPDRYDRDKLRRQETYAVGDFIGSKHIPIVISDRRQGDDHFDTELLPDIVLGADGRYYREDMLLENIVFRSIRQDDLTDDCLQTIEAISDTVIILESVGINPVAEWRAMLHRLELAGCRCPVILHRRYDCTDLEDLQLQASADMGAILLEGRGNGLMITADKLPSVAVNHLAFGILQATRLRMSRTEYISCPSCGRTLYNLQETVARIKAATAHLKELKIGIMGCIVNGPGEMADADYGYVGAGPGRIDLYKQKICVRRGIPQEQAVQQLIELIKENGDWKER.

[4Fe-4S] cluster contacts are provided by C489, C492, C523, and E530.

It belongs to the IspG family. Requires [4Fe-4S] cluster as cofactor.

It carries out the reaction (2E)-4-hydroxy-3-methylbut-2-enyl diphosphate + oxidized [flavodoxin] + H2O + 2 H(+) = 2-C-methyl-D-erythritol 2,4-cyclic diphosphate + reduced [flavodoxin]. It participates in isoprenoid biosynthesis; isopentenyl diphosphate biosynthesis via DXP pathway; isopentenyl diphosphate from 1-deoxy-D-xylulose 5-phosphate: step 5/6. In terms of biological role, converts 2C-methyl-D-erythritol 2,4-cyclodiphosphate (ME-2,4cPP) into 1-hydroxy-2-methyl-2-(E)-butenyl 4-diphosphate. In Porphyromonas gingivalis (strain ATCC BAA-308 / W83), this protein is 4-hydroxy-3-methylbut-2-en-1-yl diphosphate synthase (flavodoxin).